The chain runs to 327 residues: Peroxidase N (327 aa).

The first 28 residues, 1 to 28 (MKTQTKVMGGHVLLTVFTLCMLCSAVRA), serve as a signal peptide directing secretion. Gln29 bears the Pyrrolidone carboxylic acid mark. 4 cysteine pairs are disulfide-bonded: Cys39-Cys116, Cys72-Cys77, Cys122-Cys323, and Cys200-Cys232. His70 functions as the Proton acceptor in the catalytic mechanism. Ca(2+) contacts are provided by Asp71, Val74, Gly76, Asp78, and Ser80. Asn155 carries N-linked (GlcNAc...) asparagine glycosylation. Pro163 is a substrate binding site. Asn182 carries an N-linked (GlcNAc...) asparagine glycan. A heme b-binding site is contributed by His193. Thr194 is a Ca(2+) binding site. N-linked (GlcNAc...) asparagine glycans are attached at residues Asn209 and Asn239. Asp245 contributes to the Ca(2+) binding site. An N-linked (GlcNAc...) asparagine glycan is attached at Asn247. Ca(2+) contacts are provided by Ser248 and Asp253. Asn281 is a glycosylation site (N-linked (GlcNAc...) asparagine).

This sequence belongs to the peroxidase family. Classical plant (class III) peroxidase subfamily. Ca(2+) serves as cofactor. Requires heme b as cofactor.

Its subcellular location is the secreted. The enzyme catalyses 2 a phenolic donor + H2O2 = 2 a phenolic radical donor + 2 H2O. Functionally, removal of H(2)O(2), oxidation of toxic reductants, biosynthesis and degradation of lignin, suberization, auxin catabolism, response to environmental stresses such as wounding, pathogen attack and oxidative stress. These functions might be dependent on each isozyme/isoform in each plant tissue. The protein is Peroxidase N (HRPN) of Armoracia rusticana (Horseradish).